A 151-amino-acid chain; its full sequence is Large ribosomal subunit protein bL9 (151 aa).

Belongs to the bacterial ribosomal protein bL9 family.

In terms of biological role, binds to the 23S rRNA. This Lactobacillus johnsonii (strain CNCM I-12250 / La1 / NCC 533) protein is Large ribosomal subunit protein bL9.